We begin with the raw amino-acid sequence, 505 residues long: uncharacterized protein (505 aa).

A disordered region spans residues 1-52 (MVDGSIHVPVQSHEGQHDNSSSLNEEIQTSQDPLGIVESYQESSTSDFDKSH). Positions 18–32 (DNSSSLNEEIQTSQD) are enriched in polar residues. The next 10 membrane-spanning stretches (helical) occupy residues 141–161 (FWIV…TNTF), 173–193 (AFQT…YTVF), 208–228 (GWKY…VVLA), 235–255 (LSAS…SFIF), 265–285 (ILGV…DVIS), 290–310 (SAVN…CYGV), 326–346 (VVIG…TFIF), 362–382 (GYLA…PILF), 389–409 (FYNI…IHVF), and 415–435 (WLYP…HVFV). A phosphoserine mark is found at Ser-463, Ser-466, and Ser-467.

This sequence belongs to the SLC35F solute transporter family.

It localises to the golgi apparatus membrane. This is an uncharacterized protein from Schizosaccharomyces pombe (strain 972 / ATCC 24843) (Fission yeast).